Here is a 349-residue protein sequence, read N- to C-terminus: 5-deoxyribose 1-phosphate isomerase (349 aa).

Substrate-binding positions include 49 to 51, R92, and Q199; that span reads RGA. The active-site Proton donor is the D240. Substrate is bound at residue 250–251; that stretch reads NK.

Belongs to the EIF-2B alpha/beta/delta subunits family. DrdI subfamily.

The enzyme catalyses 5-deoxy-alpha-D-ribose 1-phosphate = 5-deoxy-D-ribulose 1-phosphate. The protein operates within carbohydrate degradation. In terms of biological role, catalyzes the isomerization of 5-deoxy-alpha-D-ribose 1-phosphate to 5-deoxy-D-ribulose 1-phosphate, as part of a 5-deoxyribose salvage pathway that recycles this toxic radical SAM enzyme by-product to mainstream metabolites. In Clostridium botulinum (strain Kyoto / Type A2), this protein is 5-deoxyribose 1-phosphate isomerase.